The following is a 196-amino-acid chain: Probable cobalt-precorrin-6B C(15)-methyltransferase (decarboxylating) (196 aa).

S-adenosyl-L-methionine-binding positions include threonine 24, 48 to 52 (GCGTG), aspartate 72, and alanine 101.

It belongs to the methyltransferase superfamily. Archaeal-type CbiT family.

It catalyses the reaction Co-precorrin-6B + S-adenosyl-L-methionine = Co-precorrin-7 + S-adenosyl-L-homocysteine + CO2. It participates in cofactor biosynthesis; adenosylcobalamin biosynthesis; cob(II)yrinate a,c-diamide from sirohydrochlorin (anaerobic route): step 8/10. Functionally, catalyzes the methylation of C-15 in cobalt-precorrin-6B followed by the decarboxylation of C-12 to form cobalt-precorrin-7. The protein is Probable cobalt-precorrin-6B C(15)-methyltransferase (decarboxylating) of Pyrobaculum aerophilum (strain ATCC 51768 / DSM 7523 / JCM 9630 / CIP 104966 / NBRC 100827 / IM2).